Consider the following 327-residue polypeptide: tRNA dimethylallyltransferase (327 aa).

14-21 (GPTASGKT) serves as a coordination point for ATP. Residue 16–21 (TASGKT) participates in substrate binding. 2 interaction with substrate tRNA regions span residues 39-42 (DSAL) and 163-167 (QRIQR).

It belongs to the IPP transferase family. In terms of assembly, monomer. Requires Mg(2+) as cofactor.

The catalysed reaction is adenosine(37) in tRNA + dimethylallyl diphosphate = N(6)-dimethylallyladenosine(37) in tRNA + diphosphate. Functionally, catalyzes the transfer of a dimethylallyl group onto the adenine at position 37 in tRNAs that read codons beginning with uridine, leading to the formation of N6-(dimethylallyl)adenosine (i(6)A). The chain is tRNA dimethylallyltransferase from Xanthomonas oryzae pv. oryzae (strain KACC10331 / KXO85).